The primary structure comprises 132 residues: Ribosome-binding factor A (132 aa).

The protein belongs to the RbfA family. As to quaternary structure, monomer. Binds 30S ribosomal subunits, but not 50S ribosomal subunits or 70S ribosomes.

The protein localises to the cytoplasm. One of several proteins that assist in the late maturation steps of the functional core of the 30S ribosomal subunit. Associates with free 30S ribosomal subunits (but not with 30S subunits that are part of 70S ribosomes or polysomes). Required for efficient processing of 16S rRNA. May interact with the 5'-terminal helix region of 16S rRNA. The polypeptide is Ribosome-binding factor A (Rhizorhabdus wittichii (strain DSM 6014 / CCUG 31198 / JCM 15750 / NBRC 105917 / EY 4224 / RW1) (Sphingomonas wittichii)).